The sequence spans 619 residues: Dihydroxy-acid dehydratase (619 aa).

Asp81 contacts Mg(2+). Cys122 lines the [2Fe-2S] cluster pocket. Residues Asp123 and Lys124 each contribute to the Mg(2+) site. N6-carboxylysine is present on Lys124. Cys195 lines the [2Fe-2S] cluster pocket. Glu494 contacts Mg(2+). Catalysis depends on Ser520, which acts as the Proton acceptor.

Belongs to the IlvD/Edd family. Homodimer. Requires [2Fe-2S] cluster as cofactor. It depends on Mg(2+) as a cofactor.

The enzyme catalyses (2R)-2,3-dihydroxy-3-methylbutanoate = 3-methyl-2-oxobutanoate + H2O. The catalysed reaction is (2R,3R)-2,3-dihydroxy-3-methylpentanoate = (S)-3-methyl-2-oxopentanoate + H2O. It functions in the pathway amino-acid biosynthesis; L-isoleucine biosynthesis; L-isoleucine from 2-oxobutanoate: step 3/4. It participates in amino-acid biosynthesis; L-valine biosynthesis; L-valine from pyruvate: step 3/4. Its function is as follows. Functions in the biosynthesis of branched-chain amino acids. Catalyzes the dehydration of (2R,3R)-2,3-dihydroxy-3-methylpentanoate (2,3-dihydroxy-3-methylvalerate) into 2-oxo-3-methylpentanoate (2-oxo-3-methylvalerate) and of (2R)-2,3-dihydroxy-3-methylbutanoate (2,3-dihydroxyisovalerate) into 2-oxo-3-methylbutanoate (2-oxoisovalerate), the penultimate precursor to L-isoleucine and L-valine, respectively. This Shewanella sp. (strain MR-4) protein is Dihydroxy-acid dehydratase.